Consider the following 253-residue polypeptide: Probable transcriptional regulatory protein A1G_04400 (253 aa).

Residues 1–21 (MAGHSKFKNIQHRKGAQDKKR) are disordered.

The protein belongs to the TACO1 family.

Its subcellular location is the cytoplasm. The polypeptide is Probable transcriptional regulatory protein A1G_04400 (Rickettsia rickettsii (strain Sheila Smith)).